Consider the following 355-residue polypeptide: MTIPATRLDQIANRFAELEARMASGTLEGEEFVQASRDYAELEPVAKVAAEVKAMREEIGGLEEMLADPEMKAMAQEELAAIREALPEKERQLAIAMLPKDSADNKPAMLEIRAGTGGDEAALFAGDLYRMYERFAGEQGWKVEPVSMNASEVGGFKEIVANVSGTGVFAKLKFESGVHRVQRVPETESGGRIHTSAATVAVLPEPDEVDVQIDDKDLKIDIYRASGAGGQHVNTTDSAVRITHLPTGIVVQQQDERSQHKNKAKAMQVLRTRLYDHLREQSQGEEAAARKAMVGSGDRSERIRTYNFPQGRVTDHRIGLTLHKLDEIIAGPGLGELVGALIAEDEAKRLAALSE.

Q231 bears the N5-methylglutamine mark.

Belongs to the prokaryotic/mitochondrial release factor family. In terms of processing, methylated by PrmC. Methylation increases the termination efficiency of RF1.

The protein resides in the cytoplasm. In terms of biological role, peptide chain release factor 1 directs the termination of translation in response to the peptide chain termination codons UAG and UAA. This chain is Peptide chain release factor 1, found in Erythrobacter litoralis (strain HTCC2594).